The primary structure comprises 183 residues: Probable apo-citrate lyase phosphoribosyl-dephospho-CoA transferase (183 aa).

It belongs to the CitX family.

The enzyme catalyses apo-[citrate lyase ACP] + 2'-(5''-triphospho-alpha-D-ribosyl)-3'-dephospho-CoA = holo-[citrate lyase ACP] + diphosphate. In terms of biological role, transfers 2-(5''-triphosphoribosyl)-3'-dephosphocoenzyme-A on a serine residue to the apo-acyl carrier protein (gamma chain) of the citrate lyase to yield holo-acyl carrier protein. The polypeptide is Probable apo-citrate lyase phosphoribosyl-dephospho-CoA transferase (Escherichia coli (strain 55989 / EAEC)).